The sequence spans 880 residues: DNA mismatch repair protein MutS (880 aa).

An ATP-binding site is contributed by 624–631; it reads GPNMAGKS.

The protein belongs to the DNA mismatch repair MutS family.

In terms of biological role, this protein is involved in the repair of mismatches in DNA. It is possible that it carries out the mismatch recognition step. This protein has a weak ATPase activity. The protein is DNA mismatch repair protein MutS of Alkaliphilus metalliredigens (strain QYMF).